The primary structure comprises 182 residues: Large ribosomal subunit protein uL16 (182 aa).

It belongs to the universal ribosomal protein uL16 family.

This is Large ribosomal subunit protein uL16 from Pyrobaculum neutrophilum (strain DSM 2338 / JCM 9278 / NBRC 100436 / V24Sta) (Thermoproteus neutrophilus).